A 250-amino-acid polypeptide reads, in one-letter code: Peptidyl-tRNA hydrolase, mitochondrial (250 aa).

The N-terminal 45 residues, 1-45 (MRLLSGASASRIPCPLLSLARARARCLPVPASATACRAASSSAAA), are a transit peptide targeting the mitochondrion. Y68 is a binding site for tRNA. H73 acts as the Proton acceptor in catalysis. TRNA is bound by residues F118, N120, and N166.

It belongs to the PTH family.

The protein resides in the mitochondrion. It catalyses the reaction an N-acyl-L-alpha-aminoacyl-tRNA + H2O = an N-acyl-L-amino acid + a tRNA + H(+). In terms of biological role, the natural substrate for this enzyme may be peptidyl-tRNAs which drop off the ribosome during protein synthesis. The chain is Peptidyl-tRNA hydrolase, mitochondrial from Oryza sativa subsp. japonica (Rice).